Consider the following 239-residue polypeptide: Glycerol-3-phosphate acyltransferase (239 aa).

6 consecutive transmembrane segments (helical) span residues 6–26 (AIALLIVFSLVIGYLMGSVMF), 61–81 (FLVGLCDALKGFLAFVFSFLI), 99–119 (YYLTYLSCFAATIGHIFPLYF), 135–155 (LAISLWWFVICLVLWLLVTLI), 159–179 (VSLASLVTFFILAIIILVPWL), and 199–219 (WYIILFFVLWYWPLTIAVFWL).

It belongs to the PlsY family. Probably interacts with PlsX.

It localises to the cell membrane. It carries out the reaction an acyl phosphate + sn-glycerol 3-phosphate = a 1-acyl-sn-glycero-3-phosphate + phosphate. It participates in lipid metabolism; phospholipid metabolism. In terms of biological role, catalyzes the transfer of an acyl group from acyl-phosphate (acyl-PO(4)) to glycerol-3-phosphate (G3P) to form lysophosphatidic acid (LPA). This enzyme utilizes acyl-phosphate as fatty acyl donor, but not acyl-CoA or acyl-ACP. The sequence is that of Glycerol-3-phosphate acyltransferase from Mycoplasma pneumoniae (strain ATCC 29342 / M129 / Subtype 1) (Mycoplasmoides pneumoniae).